The chain runs to 366 residues: Glutamate 5-kinase (366 aa).

ATP is bound at residue K17. Substrate-binding residues include S57, D144, and N156. ATP-binding positions include 176 to 177 and 216 to 222; these read SD and TGGMASK. A PUA domain is found at 278-352; that stretch reads QGILHIDEGA…GKSTQELPAE (75 aa).

Belongs to the glutamate 5-kinase family.

It is found in the cytoplasm. The catalysed reaction is L-glutamate + ATP = L-glutamyl 5-phosphate + ADP. Its pathway is amino-acid biosynthesis; L-proline biosynthesis; L-glutamate 5-semialdehyde from L-glutamate: step 1/2. Functionally, catalyzes the transfer of a phosphate group to glutamate to form L-glutamate 5-phosphate. The sequence is that of Glutamate 5-kinase from Rhodococcus opacus (strain B4).